Consider the following 314-residue polypeptide: Olfactory receptor 5B12 (314 aa).

Topologically, residues 1-23 (MENNTEVTEFILVGLTDDPELQI) are extracellular. A glycan (N-linked (GlcNAc...) asparagine) is linked at N3. Residues 24 to 44 (PLFIVFLFIYLITLVGNLGMI) traverse the membrane as a helical segment. Residues 45-52 (ELILLDSC) are Cytoplasmic-facing. The chain crosses the membrane as a helical span at residues 53–73 (LHTPMYFFLSNLSLVDFGYSS). The Extracellular portion of the chain corresponds to 74 to 97 (AVTPKVMVGFLTGDKFILYNACAT). Residues C95 and C187 are joined by a disulfide bond. A helical membrane pass occupies residues 98–118 (QFFFFVAFITAESFLLASMAY). Topologically, residues 119 to 137 (DRYAALCKPLHYTTTMTTN) are cytoplasmic. Residues 138-158 (VCACLAIGSYICGFLNASIHT) traverse the membrane as a helical segment. Over 159 to 194 (GNTFRLSFCRSNVVEHFFCDAPPLLTLSCSDNYISE) the chain is Extracellular. A helical membrane pass occupies residues 195–215 (MVIFFVVGFNDLFSILVILIS). Over 216-235 (YLFIFITIMKMRSPEGRQKA) the chain is Cytoplasmic. Residues 236 to 256 (FSTCASHLTAVSIFYGTGIFM) form a helical membrane-spanning segment. Topologically, residues 257–269 (YLRPNSSHFMGTD) are extracellular. N261 carries an N-linked (GlcNAc...) asparagine glycan. A helical membrane pass occupies residues 270–290 (KMASVFYAIVIPMLNPLVYSL). The Cytoplasmic portion of the chain corresponds to 291-314 (RNKEVKSAFKKTVGKAKASIGFIF).

This sequence belongs to the G-protein coupled receptor 1 family.

The protein resides in the cell membrane. Its function is as follows. Odorant receptor. This chain is Olfactory receptor 5B12 (OR5B12), found in Homo sapiens (Human).